The primary structure comprises 93 residues: UPF0175 protein AF_0100 (93 aa).

The protein belongs to the UPF0175 family.

The sequence is that of UPF0175 protein AF_0100 from Archaeoglobus fulgidus (strain ATCC 49558 / DSM 4304 / JCM 9628 / NBRC 100126 / VC-16).